We begin with the raw amino-acid sequence, 120 residues long: U15-barytoxin-Tl1c (120 aa).

Residues 1–16 (MKLFMVLVASFAFAVA) form the signal peptide. 4 disulfides stabilise this stretch: C55–C73, C66–C79, C70–C118, and C72–C89.

This sequence belongs to the neurotoxin 03 (Tx2) family. 03 subfamily. In terms of tissue distribution, expressed by the venom gland.

The protein localises to the secreted. Functionally, ion channel inhibitor. The sequence is that of U15-barytoxin-Tl1c from Trittame loki (Brush-footed trapdoor spider).